The following is a 159-amino-acid chain: Defense protein l(2)34Fc (159 aa).

An N-terminal signal peptide occupies residues 1-17 (MFRLLVLAACLAISVHA). A Reelin domain is found at 18–159 (YSDGAPKAAC…GRVTKDIDVE (142 aa)). A disulfide bond links Cys-27 and Cys-99.

Belongs to the insect defense protein family.

It is found in the secreted. Its function is as follows. May have antimicrobial activity. A late response immune regulated gene that is negatively regulated by spz during the immune response. The protein is Defense protein l(2)34Fc (l(2)34Fc) of Drosophila melanogaster (Fruit fly).